The chain runs to 387 residues: Protein-glutamate methylesterase/protein-glutamine glutaminase 1 (387 aa).

The Response regulatory domain occupies 18–136; the sequence is RVMVVDDSAV…EISGGTDFRH (119 aa). Asp69 carries the post-translational modification 4-aspartylphosphate. A CheB-type methylesterase domain is found at 190–387; sequence PAAEERPDII…AYVLRSANKR (198 aa). Catalysis depends on residues Ser204, His233, and Asp329.

The protein belongs to the CheB family. In terms of processing, phosphorylated by CheA. Phosphorylation of the N-terminal regulatory domain activates the methylesterase activity.

The protein resides in the cytoplasm. It catalyses the reaction [protein]-L-glutamate 5-O-methyl ester + H2O = L-glutamyl-[protein] + methanol + H(+). The enzyme catalyses L-glutaminyl-[protein] + H2O = L-glutamyl-[protein] + NH4(+). Functionally, involved in chemotaxis. Part of a chemotaxis signal transduction system that modulates chemotaxis in response to various stimuli. Catalyzes the demethylation of specific methylglutamate residues introduced into the chemoreceptors (methyl-accepting chemotaxis proteins or MCP) by CheR. Also mediates the irreversible deamidation of specific glutamine residues to glutamic acid. The chain is Protein-glutamate methylesterase/protein-glutamine glutaminase 1 from Rhodospirillum rubrum (strain ATCC 11170 / ATH 1.1.1 / DSM 467 / LMG 4362 / NCIMB 8255 / S1).